Consider the following 390-residue polypeptide: Putative gustatory receptor 36c (390 aa).

Over 1 to 4 (MDLE) the chain is Cytoplasmic. A helical membrane pass occupies residues 5–25 (SFLLGAVYYYGLFIGLSNFEF). At 26–36 (DWNTGRVFTKK) the chain is on the extracellular side. A helical membrane pass occupies residues 37–57 (WSTLYAIALDSCIFALYIYHW). At 58–75 (TGNTNIVNAIFGRANMLH) the chain is on the cytoplasmic side. A helical transmembrane segment spans residues 76 to 96 (EYVVAILTGLRIVTGLFTLIL). Residues 97 to 132 (RWYQRCKMMDLASKVVRMYVARPQVRRMSRWGILTK) lie on the Extracellular side of the membrane. The chain crosses the membrane as a helical span at residues 133 to 153 (FIFGSITDGLQMAMVLSAMGS). Over 154 to 165 (VDSQFYLGLGLQ) the chain is Cytoplasmic. The chain crosses the membrane as a helical span at residues 166–186 (YWMFVILNMAMMQQHMIMLFV). At 187 to 254 (RTQFQLINTE…MEEVFGIQGA (68 aa)) the chain is on the extracellular side. A helical transmembrane segment spans residues 255 to 275 (MTYGGYYLSSVGTCYLAYSIL). The Cytoplasmic portion of the chain corresponds to 276 to 288 (KHGYENLSMTLST). Residues 289-309 (VILAYSWCFFYYLDGMLNLSV) form a helical membrane-spanning segment. Topologically, residues 310–390 (MLHVQDDYWE…FLIQYDIEHF (81 aa)) are extracellular.

The protein belongs to the insect chemoreceptor superfamily. Gustatory receptor (GR) family. Gr22e subfamily. As to expression, expressed in neurons of the terminal external chemosensory organ of larvae.

It localises to the cell membrane. In terms of biological role, probable gustatory receptor which mediates acceptance or avoidance behavior, depending on its substrates. The chain is Putative gustatory receptor 36c (Gr36c) from Drosophila melanogaster (Fruit fly).